The following is a 131-amino-acid chain: Histone H2B (131 aa).

A compositionally biased stretch (basic and acidic residues) spans 1–19; that stretch reads MAPKAEKKPASKAPAEKKP. A disordered region spans residues 1 to 38; it reads MAPKAEKKPASKAPAEKKPAAKKTASSTDGGKKRTKAR. An N6-acetyllysine; alternate mark is found at Lys-7 and Lys-8. Glycyl lysine isopeptide (Lys-Gly) (interchain with G-Cter in SUMO); alternate cross-links involve residues Lys-7 and Lys-8. Ser-11 bears the Phosphoserine mark. Lys-12 carries the post-translational modification N6-acetyllysine. Lys-17 is modified (N6-acetyllysine; alternate). A Glycyl lysine isopeptide (Lys-Gly) (interchain with G-Cter in SUMO); alternate cross-link involves residue Lys-17. A Glycyl lysine isopeptide (Lys-Gly) (interchain with G-Cter in SUMO) cross-link involves residue Lys-18. Lys-125 is covalently cross-linked (Glycyl lysine isopeptide (Lys-Gly) (interchain with G-Cter in ubiquitin)).

It belongs to the histone H2B family. As to quaternary structure, the nucleosome is a histone octamer containing two molecules each of H2A, H2B, H3 and H4 assembled in one H3-H4 heterotetramer and two H2A-H2B heterodimers. The octamer wraps approximately 147 bp of DNA. In terms of processing, monoubiquitinated by the UBC2-BRE1 complex to form H2BK123ub1. H2BK123ub1 gives a specific tag for epigenetic transcriptional activation and is also prerequisite for H3K4me and H3K79me formation. H2BK123ub1 also modulates the formation of double-strand breaks during meiosis and is a prerequisite for DNA-damage checkpoint activation. Phosphorylated by STE20 to form H2BS10ph during progression through meiotic prophase. May be correlated with chromosome condensation. Post-translationally, acetylated by GCN5 to form H2BK11ac and H2BK16ac. H2BK16ac can also be formed by ESA1. Acetylation of N-terminal lysines and particularly formation of H2BK11acK16ac has a positive effect on transcription. In terms of processing, sumoylation to form H2BK6su or H2BK7su, and probably also H2BK16su or H2BK17su, occurs preferentially near the telomeres and represses gene transcription.

It localises to the nucleus. It is found in the chromosome. Functionally, core component of nucleosome. Nucleosomes wrap and compact DNA into chromatin, limiting DNA accessibility to the cellular machineries which require DNA as a template. Histones thereby play a central role in transcription regulation, DNA repair, DNA replication and chromosomal stability. DNA accessibility is regulated via a complex set of post-translational modifications of histones, also called histone code, and nucleosome remodeling. This Lodderomyces elongisporus (strain ATCC 11503 / CBS 2605 / JCM 1781 / NBRC 1676 / NRRL YB-4239) (Yeast) protein is Histone H2B (HTB1).